Here is a 219-residue protein sequence, read N- to C-terminus: Claudin-3 (219 aa).

Topologically, residues 1–8 (MSMGLEIT) are cytoplasmic. Residues 9 to 29 (GTSLAVLGWLCTIVCCALPMW) traverse the membrane as a helical segment. Residues 30 to 80 (RVSAFIGSSIITAQITWEGLWMNCVVQSTGQMQCKMYDSLLALPQDLQAAR) are Extracellular-facing. A helical transmembrane segment spans residues 81 to 101 (ALIVVSILLAAFGLLVALVGA). Over 102–115 (QCTNCVQDETAKAK) the chain is Cytoplasmic. Residues 116–136 (ITIVAGVLFLLAALLTLVPVS) form a helical membrane-spanning segment. Topologically, residues 137-159 (WSANTIIRDFYNPLVPEAQKREM) are extracellular. The helical transmembrane segment at 160–180 (GAGLYVGWAAAALQLLGGALL) threads the bilayer. Residues 181 to 219 (CCSCPPRDKYAPTKILYSAPRSTGPGTGTGTAYDRKDYV) lie on the Cytoplasmic side of the membrane. Position 197 is a phosphotyrosine (Tyr197). Residue Ser198 is modified to Phosphoserine. An interactions with TJP1, TJP2 and TJP3 region spans residues 218–219 (YV).

This sequence belongs to the claudin family. As to quaternary structure, can form homo- and heteropolymers with other CLDN. Homopolymers interact with CLDN1 and CLDN2 homopolymers. Interacts in cis (within the same plasma membrane) with CLDN19. Directly interacts with TJP1/ZO-1, TJP2/ZO-2 and TJP3/ZO-3. In terms of assembly, (Microbial infection) Interacts with Clostridium perfringens enterotoxin CPE; the interaction may disrupt claudin assembly in tight junctions. Expressed in the lung. Expressed at high levels in the liver and at lower levels, in kidney and testis.

It is found in the cell junction. It localises to the tight junction. The protein localises to the cell membrane. Its function is as follows. Plays a major role in tight junction-specific obliteration of the intercellular space, through calcium-independent cell-adhesion activity. The protein is Claudin-3 (Cldn3) of Mus musculus (Mouse).